The primary structure comprises 885 residues: Disease resistance protein RFL1 (885 aa).

A coiled-coil region spans residues 27-61; it reads SYIQNLSENLASLQKAMGVLNAKRDDVQGRINREE. Residues 141-443 form the NB-ARC domain; the sequence is EAAPIAEVEE…CEGFIKEKQG (303 aa). Residue 183-190 participates in ATP binding; sequence GMGGVGKT. LRR repeat units lie at residues 517–538, 539–561, 564–586, 588–610, 611–633, 634–655, and 657–679; these read AVKRMSLMNNNFEKILGSPECV, ELITLFLQNNYKLVDISMEFFRC, SLAVLDLSENHSLSELPEEISEL, SLQYLDLSGTYIERLPHGLHELR, KLVHLKLERTRRLESISGISYLS, SLRTLRLRDSKTTLDTGLMKEL, and LLEHLELITTDISSGLVGELFCY.

This sequence belongs to the disease resistance NB-LRR family.

Its function is as follows. Disease resistance (R) protein. This is Disease resistance protein RFL1 (RFL1) from Arabidopsis thaliana (Mouse-ear cress).